A 171-amino-acid polypeptide reads, in one-letter code: NADH-quinone oxidoreductase subunit I (171 aa).

2 4Fe-4S ferredoxin-type domains span residues 41-71 (LTRDPDGEERCVACNLCSVACPVDCISVVKT) and 81-110 (ESFTINFSRCIMCGFCEEACPTHAIQLTPD). Residues Cys51, Cys54, Cys57, Cys61, Cys90, Cys93, Cys96, and Cys100 each contribute to the [4Fe-4S] cluster site.

Belongs to the complex I 23 kDa subunit family. As to quaternary structure, NDH-1 is composed of 13 different subunits. Subunits NuoA, H, J, K, L, M, N constitute the membrane sector of the complex. Requires [4Fe-4S] cluster as cofactor.

The protein localises to the cell inner membrane. It carries out the reaction a quinone + NADH + 5 H(+)(in) = a quinol + NAD(+) + 4 H(+)(out). Functionally, NDH-1 shuttles electrons from NADH, via FMN and iron-sulfur (Fe-S) centers, to quinones in the respiratory chain. The immediate electron acceptor for the enzyme in this species is believed to be ubiquinone. Couples the redox reaction to proton translocation (for every two electrons transferred, four hydrogen ions are translocated across the cytoplasmic membrane), and thus conserves the redox energy in a proton gradient. This chain is NADH-quinone oxidoreductase subunit I, found in Shewanella woodyi (strain ATCC 51908 / MS32).